The following is a 629-amino-acid chain: tRNA uridine 5-carboxymethylaminomethyl modification enzyme MnmG (629 aa).

Residue 13–18 (GGGHAG) coordinates FAD. Residue 273 to 287 (GPRYCPSIEDKIHRF) participates in NAD(+) binding.

Belongs to the MnmG family. As to quaternary structure, homodimer. Heterotetramer of two MnmE and two MnmG subunits. It depends on FAD as a cofactor.

The protein resides in the cytoplasm. Functionally, NAD-binding protein involved in the addition of a carboxymethylaminomethyl (cmnm) group at the wobble position (U34) of certain tRNAs, forming tRNA-cmnm(5)s(2)U34. The sequence is that of tRNA uridine 5-carboxymethylaminomethyl modification enzyme MnmG from Shewanella denitrificans (strain OS217 / ATCC BAA-1090 / DSM 15013).